The sequence spans 384 residues: FAD-dependent urate hydroxylase (384 aa).

FAD contacts are provided by residues Gly11, 30–31, Ser43, and Val125; that span reads EA. Residues Asn178, Arg204, and 216–218 contribute to the substrate site; that span reads YFF. FAD-binding positions include Asp285 and 295–299; that span reads GQGGC.

The protein belongs to the FAD-dependent urate hydroxylase family. FAD is required as a cofactor.

The catalysed reaction is urate + NADH + O2 + H(+) = 5-hydroxyisourate + NAD(+) + H2O. It functions in the pathway purine metabolism; urate degradation. In terms of biological role, catalyzes the hydroxylation of uric acid to 5-hydroxyisourate. The polypeptide is FAD-dependent urate hydroxylase (hpxO) (Klebsiella oxytoca).